A 66-amino-acid chain; its full sequence is COP-associated protein (66 aa).

Residues 1–66 form the HMA domain; it reads MKATFQVPSI…ALLDAGQEVV (66 aa). Residues cysteine 12 and cysteine 15 each contribute to the Cu cation site. The cysteines at positions 12 and 15 are disulfide-linked.

Functionally, part of a cation-transporting system which is associated with copper export out of the H.pylori cells. This is COP-associated protein (copP) from Helicobacter pylori (strain ATCC 700392 / 26695) (Campylobacter pylori).